We begin with the raw amino-acid sequence, 467 residues long: Phytase A (467 aa).

An N-terminal signal peptide occupies residues 1 to 23 (MGVSAVLLPLYLLAGVTSGLAVP). The N-linked (GlcNAc...) asparagine glycan is linked to asparagine 27. Cysteine 31 and cysteine 40 are joined by a disulfide. 2 residues coordinate 1D-myo-inositol hexakisphosphate: glutamine 50 and tyrosine 51. N-linked (GlcNAc...) asparagine glycosylation is present at asparagine 59. 4 cysteine pairs are disulfide-bonded: cysteine 71–cysteine 414, cysteine 215–cysteine 465, cysteine 264–cysteine 282, and cysteine 436–cysteine 444. Positions 81, 82, 85, and 88 each coordinate 1D-myo-inositol hexakisphosphate. Histidine 82 functions as the Nucleophile in the catalytic mechanism. Asparagine 105 and asparagine 120 each carry an N-linked (GlcNAc...) asparagine glycan. Residue arginine 165 coordinates 1D-myo-inositol hexakisphosphate. N-linked (GlcNAc...) asparagine glycans are attached at residues asparagine 207 and asparagine 230. Lysine 301 is a 1D-myo-inositol hexakisphosphate binding site. N-linked (GlcNAc...) asparagine glycosylation is found at asparagine 339 and asparagine 352. Positions 361 and 362 each coordinate 1D-myo-inositol hexakisphosphate. N-linked (GlcNAc...) asparagine glycans are attached at residues asparagine 376 and asparagine 388.

This sequence belongs to the histidine acid phosphatase family. Monomer.

It localises to the secreted. The enzyme catalyses 1D-myo-inositol hexakisphosphate + H2O = 1D-myo-inositol 1,2,4,5,6-pentakisphosphate + phosphate. It catalyses the reaction 1D-myo-inositol 1,2,4,5,6-pentakisphosphate + H2O = 1D-myo-inositol 1,2,5,6-tetrakisphosphate + phosphate. The catalysed reaction is 1D-myo-inositol 1,2,5,6-tetrakisphosphate + H2O = 1D-myo-inositol 1,2,6-trisphosphate + phosphate. It carries out the reaction 1D-myo-inositol 1,2,6-trisphosphate + H2O = 1D-myo-inositol 1,2-bisphosphate + phosphate. The enzyme catalyses 1D-myo-inositol 1,2-bisphosphate + H2O = 1D-myo-inositol 2-phosphate + phosphate. In terms of biological role, catalyzes the phosphate monoester hydrolysis of phytic acid (myo-inositol hexakisphosphate), which results in the stepwise formation of myo-inositol pentakis-, tetrakis-, tris-, bis-, and monophosphates, as well as the liberation of inorganic phosphate. Myo-inositol 2-monophosphate is the end product. The sequence is that of Phytase A (phyA) from Aspergillus awamori (Black koji mold).